The following is a 329-amino-acid chain: Alpha/beta hydrolase domain-containing protein 17C (329 aa).

The disordered stretch occupies residues 46 to 85 (APEQRGPGAPAPASAASTSSASAAAQPAPQQPEEGGAGPG). Over residues 51–79 (GPGAPAPASAASTSSASAAAQPAPQQPEE) the composition is skewed to low complexity. Residues Ser-211, Asp-276, and His-305 each act as charge relay system in the active site.

This sequence belongs to the AB hydrolase superfamily. ABHD17 family. Palmitoylated on cysteine residues located in a cysteine cluster at the N-terminus which promotes membrane localization. Palmitoylation is required for post-synaptic localization and for depalmitoylating activity towards DLG4/PSD95.

It is found in the recycling endosome membrane. The protein localises to the cell projection. The protein resides in the dendritic spine. It localises to the postsynaptic density membrane. It carries out the reaction S-hexadecanoyl-L-cysteinyl-[protein] + H2O = L-cysteinyl-[protein] + hexadecanoate + H(+). Hydrolyzes fatty acids from S-acylated cysteine residues in proteins. Has depalmitoylating activity towards NRAS and DLG4/PSD95. This chain is Alpha/beta hydrolase domain-containing protein 17C, found in Bos taurus (Bovine).